The following is a 345-amino-acid chain: GMP reductase 1 (345 aa).

NADP(+) is bound by residues 26-27 (SR), Lys-78, 129-131 (DVA), and 180-181 (VG). K(+) is bound by residues Gly-181, Gly-183, and Cys-186. Residue Cys-186 is the Thioimidate intermediate of the active site. Catalysis depends on Thr-188, which acts as the Proton donor/acceptor. Residue Arg-189 participates in K(+) binding. GMP-binding positions include 219 to 221 (DGG), 242 to 243 (GG), 268 to 270 (GMS), and 286 to 290 (RASEG). Residues Met-269, 285 to 286 (YR), and 314 to 317 (STCT) contribute to the NADP(+) site.

Belongs to the IMPDH/GMPR family. GuaC type 1 subfamily. Homotetramer.

It carries out the reaction IMP + NH4(+) + NADP(+) = GMP + NADPH + 2 H(+). In terms of biological role, catalyzes the irreversible NADPH-dependent deamination of GMP to IMP. It functions in the conversion of nucleobase, nucleoside and nucleotide derivatives of G to A nucleotides, and in maintaining the intracellular balance of A and G nucleotides. The chain is GMP reductase 1 (GMPR) from Homo sapiens (Human).